The chain runs to 501 residues: MSSSAMPDVPAPLTNLQFKYTKIFINNEWHSSVSGKKFPVFNPATEEKLCEVEEGDKEDVDKAVKAARQAFQIGSPWRTMDASERGRLLNKLADLIERDRLLLATMEAMNGGKLFSNAYLMDLGGCIKTLRYCAGWADKIQGRTIPMDGNFFTYTRSEPVGVCGQIIPWNFPLLMFLWKIGPALSCGNTVVVKPAEQTPLTALHMGSLIKEAGFPPGVVNIVPGYGPTAGAAISSHMDVDKVAFTGSTEVGKLIKEAAGKSNLKRVSLELGGKSPCIVFADADLDNAVEFAHQGVFYHQGQCCIAASRLFVEESIYDEFVRRSVERAKKYVLGNPLTPGVSQGPQIDKEQYEKILDLIESGKKEGAKLECGGGPWGNKGYFIQPTVFSDVTDDMRIAKEEIFGPVQQIMKFKSLDDVIKRANNTFYGLSAGIFTNDIDKAITVSSALQSGTVWVNCYSVVSAQCPFGGFKMSGNGRELGEYGFHEYTEVKTVTIKISQKNS.

At serine 2 the chain carries N-acetylserine. Lysine 91 and lysine 128 each carry N6-acetyllysine. NAD(+)-binding positions include 167–170, 193–196, 226–227, and 246–247; these read IPWN, KPAE, GP, and GS. Residue lysine 252 is modified to N6-acetyllysine. The active-site Proton acceptor is glutamate 269. 269–271 contacts NAD(+); that stretch reads ELG. Cysteine 303 functions as the Nucleophile in the catalytic mechanism. The segment at 336–501 is mediates interaction with PRMT3; it reads LTPGVSQGPQ…VTIKISQKNS (166 aa). Threonine 337 bears the Phosphothreonine mark. 349 to 353 provides a ligand contact to NAD(+); the sequence is EQYEK. N6-acetyllysine occurs at positions 353 and 367. 400–402 serves as a coordination point for NAD(+); sequence EIF. Residue lysine 410 is modified to N6-acetyllysine. Phosphoserine is present on serine 413. An N6-acetyllysine mark is found at lysine 419 and lysine 495.

This sequence belongs to the aldehyde dehydrogenase family. Homotetramer. Interacts with PRMT3; the interaction is direct, inhibits ALDH1A1 aldehyde dehydrogenase activity and is independent of the methyltransferase activity of PRMT3. The N-terminus is blocked most probably by acetylation.

It is found in the cytoplasm. Its subcellular location is the cytosol. The protein localises to the cell projection. It localises to the axon. It catalyses the reaction an aldehyde + NAD(+) + H2O = a carboxylate + NADH + 2 H(+). The catalysed reaction is all-trans-retinal + NAD(+) + H2O = all-trans-retinoate + NADH + 2 H(+). It carries out the reaction 9-cis-retinal + NAD(+) + H2O = 9-cis-retinoate + NADH + 2 H(+). The enzyme catalyses 11-cis-retinal + NAD(+) + H2O = 11-cis-retinoate + NADH + 2 H(+). It catalyses the reaction 13-cis-retinal + NAD(+) + H2O = 13-cis-retinoate + NADH + 2 H(+). The catalysed reaction is 3-deoxyglucosone + NAD(+) + H2O = 2-dehydro-3-deoxy-D-gluconate + NADH + 2 H(+). It carries out the reaction (E)-4-hydroxynon-2-enal + NAD(+) + H2O = (E)-4-hydroxynon-2-enoate + NADH + 2 H(+). The enzyme catalyses malonaldehyde + NAD(+) + H2O = 3-oxopropanoate + NADH + 2 H(+). It catalyses the reaction hexanal + NAD(+) + H2O = hexanoate + NADH + 2 H(+). The catalysed reaction is propanal + NAD(+) + H2O = propanoate + NADH + 2 H(+). It carries out the reaction acetaldehyde + NAD(+) + H2O = acetate + NADH + 2 H(+). The enzyme catalyses benzaldehyde + NAD(+) + H2O = benzoate + NADH + 2 H(+). It catalyses the reaction 4-aminobutanal + NAD(+) + H2O = 4-aminobutanoate + NADH + 2 H(+). Its pathway is cofactor metabolism; retinol metabolism. With respect to regulation, inhibited by duocarmycin analogs. Functionally, cytosolic dehydrogenase that catalyzes the irreversible oxidation of a wide range of aldehydes to their corresponding carboxylic acid. Functions downstream of retinol dehydrogenases and catalyzes the oxidation of retinaldehyde into retinoic acid, the second step in the oxidation of retinol/vitamin A into retinoic acid. This pathway is crucial to control the levels of retinol and retinoic acid, two important molecules which excess can be teratogenic and cytotoxic. Also oxidizes aldehydes resulting from lipid peroxidation like (E)-4-hydroxynon-2-enal/HNE, malonaldehyde and hexanal that form protein adducts and are highly cytotoxic. By participating for instance to the clearance of (E)-4-hydroxynon-2-enal/HNE in the lens epithelium prevents the formation of HNE-protein adducts and lens opacification. Also functions downstream of fructosamine-3-kinase in the fructosamine degradation pathway by catalyzing the oxidation of 3-deoxyglucosone, the carbohydrate product of fructosamine 3-phosphate decomposition, which is itself a potent glycating agent that may react with lysine and arginine side-chains of proteins. Also has an aminobutyraldehyde dehydrogenase activity and is probably part of an alternative pathway for the biosynthesis of GABA/4-aminobutanoate in midbrain, thereby playing a role in GABAergic synaptic transmission. This chain is Aldehyde dehydrogenase 1A1, found in Ovis aries (Sheep).